Reading from the N-terminus, the 365-residue chain is tRNA-specific 2-thiouridylase MnmA (365 aa).

ATP contacts are provided by residues 14 to 21 and L40; that span reads AMSGGVDS. C108 serves as the catalytic Nucleophile. C108 and C204 are disulfide-bonded. G132 contacts ATP. The segment at 154–156 is interaction with tRNA; that stretch reads KDQ. The Cysteine persulfide intermediate role is filled by C204.

It belongs to the MnmA/TRMU family.

The protein resides in the cytoplasm. It catalyses the reaction S-sulfanyl-L-cysteinyl-[protein] + uridine(34) in tRNA + AH2 + ATP = 2-thiouridine(34) in tRNA + L-cysteinyl-[protein] + A + AMP + diphosphate + H(+). Functionally, catalyzes the 2-thiolation of uridine at the wobble position (U34) of tRNA, leading to the formation of s(2)U34. The polypeptide is tRNA-specific 2-thiouridylase MnmA (Rickettsia peacockii (strain Rustic)).